The following is a 316-amino-acid chain: Porphobilinogen deaminase (316 aa).

C249 carries the S-(dipyrrolylmethanemethyl)cysteine modification.

This sequence belongs to the HMBS family. Monomer. Dipyrromethane is required as a cofactor.

It catalyses the reaction 4 porphobilinogen + H2O = hydroxymethylbilane + 4 NH4(+). It participates in porphyrin-containing compound metabolism; protoporphyrin-IX biosynthesis; coproporphyrinogen-III from 5-aminolevulinate: step 2/4. In terms of biological role, tetrapolymerization of the monopyrrole PBG into the hydroxymethylbilane pre-uroporphyrinogen in several discrete steps. This Nitrobacter winogradskyi (strain ATCC 25391 / DSM 10237 / CIP 104748 / NCIMB 11846 / Nb-255) protein is Porphobilinogen deaminase.